We begin with the raw amino-acid sequence, 507 residues long: Histidine ammonia-lyase (507 aa).

The segment at residues 141 to 143 is a cross-link (5-imidazolinone (Ala-Gly)); that stretch reads ASG. S142 carries the post-translational modification 2,3-didehydroalanine (Ser).

Belongs to the PAL/histidase family. In terms of processing, contains an active site 4-methylidene-imidazol-5-one (MIO), which is formed autocatalytically by cyclization and dehydration of residues Ala-Ser-Gly.

It localises to the cytoplasm. It carries out the reaction L-histidine = trans-urocanate + NH4(+). The protein operates within amino-acid degradation; L-histidine degradation into L-glutamate; N-formimidoyl-L-glutamate from L-histidine: step 1/3. The sequence is that of Histidine ammonia-lyase from Burkholderia orbicola (strain MC0-3).